The chain runs to 415 residues: All trans-polyprenyl-diphosphate synthase PDSS1 (415 aa).

The disordered stretch occupies residues 16 to 35 (PAARSPGPGSPGRAGPLGPS). 3 residues coordinate isopentenyl diphosphate: Lys134, Arg137, and His173. The Mg(2+) site is built by Asp180 and Asp184. Arg190 is a binding site for isopentenyl diphosphate.

It belongs to the FPP/GGPP synthase family. In terms of assembly, heterotetramer composed of 2 PDSS1/DPS1 and 2 PDSS2/DLP1 subunits. Mg(2+) is required as a cofactor.

Its subcellular location is the mitochondrion. The enzyme catalyses 7 isopentenyl diphosphate + (2E,6E)-farnesyl diphosphate = all-trans-decaprenyl diphosphate + 7 diphosphate. The catalysed reaction is 6 isopentenyl diphosphate + (2E,6E)-farnesyl diphosphate = all-trans-nonaprenyl diphosphate + 6 diphosphate. The protein operates within cofactor biosynthesis; ubiquinone biosynthesis. In terms of biological role, heterotetrameric enzyme that catalyzes the condensation of farnesyl diphosphate (FPP), which acts as a primer, and isopentenyl diphosphate (IPP) to produce prenyl diphosphates of varying chain lengths and participates in the determination of the side chain of ubiquinone. Supplies nona and decaprenyl diphosphate, the precursors for the side chain of the isoprenoid quinones ubiquinone-9 (Q9)and ubiquinone-10 (Q10) respectively. The enzyme adds isopentenyl diphosphate molecules sequentially to farnesyl diphosphate with trans stereochemistry. The sequence is that of All trans-polyprenyl-diphosphate synthase PDSS1 from Homo sapiens (Human).